A 212-amino-acid polypeptide reads, in one-letter code: Peroxisomal membrane protein 4 (212 aa).

Transmembrane regions (helical) follow at residues 97-117 (GKTY…LVFG) and 153-173 (LDPF…LFEY). An N-linked (GlcNAc...) asparagine glycan is attached at Asn206.

Belongs to the peroxisomal membrane protein PXMP2/4 family. As to quaternary structure, interacts with PEX19.

The protein resides in the peroxisome membrane. In Bos taurus (Bovine), this protein is Peroxisomal membrane protein 4 (PXMP4).